We begin with the raw amino-acid sequence, 391 residues long: MDLYEYQARDLFEKHGVPVLRGIVAETPEQASEAAAKLGTPVVAVKAQVKVGGRGKAGGVKIAKSAAEAAERAEAILGMDIKGHTVHKVMVAEGADIAEEYYFSILLDRGERRYLAMCSREGGMDIETLAKERPEALAKVPVDPIDGVDDAKAREILSEAGFPDSEQDAIVPAVLKLWETYRDEDATLVEVNPMIKTGDGRILAIDGKMTVDNNASFRQPDHAGLVDRATTDPLELRAGELGLNYVKLDGNVGVIGNGAGLVMSTLDCVAYAGENFPGSPAPANFLDIGGGASAEIMANGLDLIMSDEQVRSVFVNVFGGITACDQVALGIKGALEKLGDKAVKPLVVRLDGNAVAEGRKILEEFNYPLVTMVSTMDEAASKAAELASKEA.

The ATP-grasp domain maps to 9-237; sequence RDLFEKHGVP…RATTDPLELR (229 aa). Residues Lys-46, 53–55, Ala-95, and Glu-100 each bind ATP; that span reads GRG. Asn-192 and Asp-206 together coordinate Mg(2+). Substrate-binding positions include Asn-257 and 320-322; that span reads GIT.

Belongs to the succinate/malate CoA ligase beta subunit family. Heterotetramer of two alpha and two beta subunits. The cofactor is Mg(2+).

The enzyme catalyses succinate + ATP + CoA = succinyl-CoA + ADP + phosphate. It carries out the reaction GTP + succinate + CoA = succinyl-CoA + GDP + phosphate. It functions in the pathway carbohydrate metabolism; tricarboxylic acid cycle; succinate from succinyl-CoA (ligase route): step 1/1. Its function is as follows. Succinyl-CoA synthetase functions in the citric acid cycle (TCA), coupling the hydrolysis of succinyl-CoA to the synthesis of either ATP or GTP and thus represents the only step of substrate-level phosphorylation in the TCA. The beta subunit provides nucleotide specificity of the enzyme and binds the substrate succinate, while the binding sites for coenzyme A and phosphate are found in the alpha subunit. The sequence is that of Succinate--CoA ligase [ADP-forming] subunit beta from Cutibacterium acnes (strain DSM 16379 / KPA171202) (Propionibacterium acnes).